Consider the following 234-residue polypeptide: Thiamine import ATP-binding protein ThiQ (234 aa).

Positions 2 to 230 constitute an ABC transporter domain; the sequence is LVLDDVQYTY…HPSKTLQAFV (229 aa). Position 32 to 39 (32 to 39) interacts with ATP; that stretch reads GPSGAGKS.

The protein belongs to the ABC transporter superfamily. Thiamine importer (TC 3.A.1.19.1) family. In terms of assembly, the complex is composed of two ATP-binding proteins (ThiQ), two transmembrane proteins (ThiP) and a solute-binding protein (ThiB).

It is found in the cell inner membrane. The enzyme catalyses thiamine(out) + ATP + H2O = thiamine(in) + ADP + phosphate + H(+). Part of the ABC transporter complex ThiBPQ involved in thiamine import. Responsible for energy coupling to the transport system. This is Thiamine import ATP-binding protein ThiQ from Vibrio parahaemolyticus serotype O3:K6 (strain RIMD 2210633).